An 86-amino-acid polypeptide reads, in one-letter code: Protein U17 (86 aa).

This chain is Protein U17 (U17/U16), found in Homo sapiens (Human).